A 207-amino-acid polypeptide reads, in one-letter code: MTKKSTKSEAASKTKKSGVPETGAQGVRAGGADHADAAHLGTVNNALVNHHYLEEKEFQTVAETLQRNLATTISLYLKFKKYHWDIRGRFFRDLHLAYDEFIAEIFPSIDEQAERLVALGGSPLAAPADLARYSTVQVPQETVRDARTQVADLVQDLSRVGKGYRDDSQACDEANDPVTADMYNGYAATIDKIRWMLQAIMDDERLD.

Over residues 1 to 12 (MTKKSTKSEAAS) the composition is skewed to basic and acidic residues. The segment at 1-31 (MTKKSTKSEAASKTKKSGVPETGAQGVRAGG) is disordered. Fe cation contacts are provided by histidine 83, aspartate 110, and glutamate 114.

This sequence belongs to the Dps family. As to quaternary structure, the 12 subunits form a hollow sphere into which the mineral iron core of up to 500 Fe(3+) can be deposited. The homododecameric forms at higher concentration of salt, the homodimeric form under reducing, low-salt conditions. The assembly of the dodecamer is irreversible.

The protein resides in the cytoplasm. Its subcellular location is the nucleoid. The enzyme catalyses 2 Fe(2+) + H2O2 + 2 H(+) = 2 Fe(3+) + 2 H2O. Its function is as follows. Protects DNA from oxidative damage by sequestering intracellular Fe(2+) ion and storing it in the form of Fe(3+) oxyhydroxide mineral. One hydrogen peroxide oxidizes two Fe(2+) ions, which prevents hydroxyl radical production by the Fenton reaction. Both oligomeric forms of dps exhibit ferroxidase activity and DNA binding. Dodecameric dps is capable of Fe(2+) oxidation/mineralization. Only dimeric dps affords efficient DNA protection against hydroxyl radical-mediated cleavage. In Deinococcus radiodurans (strain ATCC 13939 / DSM 20539 / JCM 16871 / CCUG 27074 / LMG 4051 / NBRC 15346 / NCIMB 9279 / VKM B-1422 / R1), this protein is DNA protection during starvation protein 1 (dps1).